Reading from the N-terminus, the 244-residue chain is uncharacterized protein (244 aa).

4 consecutive transmembrane segments (helical) span residues 20–42 (TITA…VVLI), 49–67 (FVYI…ATKV), 82–101 (TPSI…ASVF), and 108–125 (AFLV…ATPI).

The protein localises to the cell membrane. This is an uncharacterized protein from Archaeoglobus fulgidus (strain ATCC 49558 / DSM 4304 / JCM 9628 / NBRC 100126 / VC-16).